The following is a 321-amino-acid chain: Chemotaxis protein CheV1 (321 aa).

The CheW-like domain maps to 19–177 (ELQLLCFRLG…IEKMLIDVFP (159 aa)). In terms of domain architecture, Response regulatory spans 198–319 (CVLLADDSPS…IQRVVKQFLE (122 aa)). Asp252 is subject to 4-aspartylphosphate.

Functionally, plays an essential role in chemotaxis signal transduction system in order to colonize the host stomach. May act as a phosphate sink to control the flow of phosphate to CheAY. The protein is Chemotaxis protein CheV1 of Helicobacter pylori (strain ATCC 700392 / 26695) (Campylobacter pylori).